The chain runs to 78 residues: Keratin-associated protein 6-5 (78 aa).

The interval 3-76 is 25 X 2 AA repeats of G-[YCGS]; it reads GYYGNYYGGR…GSGYGSGFGY (74 aa).

Belongs to the KRTAP type 6 family. In terms of assembly, interacts with hair keratins. In terms of tissue distribution, strong expression in narrowly defined pattern restricted to the lower and middle cortical regions of the hair shaft in both developing and cycling hair. During hair follicle regression (catagen), expression levels decrease until expression is no longer detectable in follicles at resting stage (telogen).

In the hair cortex, hair keratin intermediate filaments are embedded in an interfilamentous matrix, consisting of hair keratin-associated proteins (KRTAP), which are essential for the formation of a rigid and resistant hair shaft through their extensive disulfide bond cross-linking with abundant cysteine residues of hair keratins. The matrix proteins include the high-sulfur and high-glycine-tyrosine keratins. This chain is Keratin-associated protein 6-5 (Krtap6-5), found in Mus musculus (Mouse).